We begin with the raw amino-acid sequence, 544 residues long: Chaperonin GroEL (544 aa).

ATP-binding positions include 29–32 (TLGP), 86–90 (DGTTT), G413, 476–478 (NAL), and D492.

Belongs to the chaperonin (HSP60) family. Forms a cylinder of 14 subunits composed of two heptameric rings stacked back-to-back. Interacts with the co-chaperonin GroES.

Its subcellular location is the cytoplasm. It catalyses the reaction ATP + H2O + a folded polypeptide = ADP + phosphate + an unfolded polypeptide.. Together with its co-chaperonin GroES, plays an essential role in assisting protein folding. The GroEL-GroES system forms a nano-cage that allows encapsulation of the non-native substrate proteins and provides a physical environment optimized to promote and accelerate protein folding. In Desulfitobacterium hafniense (strain DSM 10664 / DCB-2), this protein is Chaperonin GroEL.